We begin with the raw amino-acid sequence, 122 residues long: UPF0102 protein CPF_1959 (122 aa).

This sequence belongs to the UPF0102 family.

The protein is UPF0102 protein CPF_1959 of Clostridium perfringens (strain ATCC 13124 / DSM 756 / JCM 1290 / NCIMB 6125 / NCTC 8237 / Type A).